The chain runs to 334 residues: MAYRICLIEGDGIGHEVIPAARRVLEATGLPLEFVEAEAGWETFERRGTSVPEETVEKILSCHATLFGAATSPTRKVPGFFGAIRYLRRRLDLYANVRPAKSRPVPGSRPGVDLVIVRENTEGLYVEQERRYLDVAIADAVISKKASERIGRAALRIAEGRPRKTLHIAHKANVLPLTQGLFLDTVKEVAKDFPLVNVQDIIVDNCAMQLVMRPERFDVIVTTNLLGDILSDLAAGLVGGLGLAPSGNIGDTTAVFEPVHGSAPDIAGKGIANPTAAILSAAMMLDYLGEKEAAKRVEKAVDLVLERGPRTPDLGGDATTEAFTEAVVEALKSL.

NADH is bound at residue 70 to 72; it reads ATS. Ser72, Arg85, Arg88, Arg98, Arg118, Tyr125, Lys171, and Asn173 together coordinate (2R,3S)-homoisocitrate. NADH is bound at residue Asn173. Mg(2+)-binding residues include Asp204, Asp228, and Asp232. Residues 261–265 and Asn273 each bind NADH; that span reads GSAPD.

Belongs to the isocitrate and isopropylmalate dehydrogenases family. In terms of assembly, homotetramer. Dimer of dimers. The homotetramer can transiently dissociate into homodimers. Mg(2+) serves as cofactor.

It carries out the reaction (2R,3S)-homoisocitrate + NAD(+) = 2-oxoadipate + CO2 + NADH. The enzyme catalyses D-threo-isocitrate + NAD(+) = 2-oxoglutarate + CO2 + NADH. It participates in amino-acid biosynthesis; L-lysine biosynthesis via AAA pathway; L-alpha-aminoadipate from 2-oxoglutarate: step 4/5. Functionally, catalyzes the NAD(+)-dependent oxidative decarboxylation of homoisocitrate to 2-oxoadipate (alpha-ketoadipate), a reaction involved in lysine biosynthesis through the alpha-aminoadipate pathway. In addition, has high activity with isocitrate, but is inactive with 3-isopropylmalate. In Thermus thermophilus (strain ATCC BAA-163 / DSM 7039 / HB27), this protein is Isocitrate/homoisocitrate dehydrogenase (hicd).